A 520-amino-acid chain; its full sequence is GMP synthase [glutamine-hydrolyzing] (520 aa).

Residues S9 to D202 enclose the Glutamine amidotransferase type-1 domain. The Nucleophile role is filled by C86. Catalysis depends on residues H176 and E178. The GMPS ATP-PPase domain occupies W203 to R395. Position 230–236 (S230–S236) interacts with ATP.

As to quaternary structure, homodimer.

The catalysed reaction is XMP + L-glutamine + ATP + H2O = GMP + L-glutamate + AMP + diphosphate + 2 H(+). The protein operates within purine metabolism; GMP biosynthesis; GMP from XMP (L-Gln route): step 1/1. Catalyzes the synthesis of GMP from XMP. The protein is GMP synthase [glutamine-hydrolyzing] of Rhizobium johnstonii (strain DSM 114642 / LMG 32736 / 3841) (Rhizobium leguminosarum bv. viciae).